Here is a 38-residue protein sequence, read N- to C-terminus: Alpha-2-macroglobulin homolog (38 aa).

The segment at residues 27–30 (CGEQ) is a cross-link (isoglutamyl cysteine thioester (Cys-Gln)).

It belongs to the protease inhibitor I39 (alpha-2-macroglobulin) family. As to quaternary structure, homodimer; disulfide-linked. Hemolymph.

Its subcellular location is the secreted. Is able to inhibit all four classes of proteinases by a unique 'trapping' mechanism. This protein has a peptide stretch, called the 'bait region' which contains specific cleavage sites for different proteinases. When a proteinase cleaves the bait region, a conformational change is induced in the protein which traps the proteinase. The entrapped enzyme remains active against low molecular weight substrates (activity against high molecular weight substrates is greatly reduced). Following cleavage in the bait region a thioester bond is hydrolyzed and mediates the covalent binding of the protein to the proteinase. The chain is Alpha-2-macroglobulin homolog from Homarus americanus (American lobster).